We begin with the raw amino-acid sequence, 627 residues long: uncharacterized protein (627 aa).

Residues 1-32 (MVDDSNYLTPHETALAVVATAMKKARLQLDTL) are Extracellular-facing. A helical membrane pass occupies residues 33 to 53 (LINSILGGVLFSSGSFLLVAV). Topologically, residues 54-66 (YSEDPDIVARNPG) are cytoplasmic. A helical transmembrane segment spans residues 67 to 87 (IVNLITGVNFAMGLFYVVMMG). Topologically, residues 88-113 (ADLFNSNILFFSVGVLRKAVTIYDLM) are extracellular. A helical transmembrane segment spans residues 114–134 (ISWVVSWLGNIAGSLFVSYLF). At 135-165 (GHLSGISSQKLWIIGSRQIIEQKVSYSFVQT) the chain is on the cytoplasmic side. A helical transmembrane segment spans residues 166 to 186 (FLKGIACNFFVCLAIYLQLMA). The Extracellular portion of the chain corresponds to 187–192 (KPIHVK). The helical transmembrane segment at 193-213 (FILMSFPIIDFIGIGFTHVVG) threads the bilayer. The Cytoplasmic segment spans residues 214–218 (DMSAS). The chain crosses the membrane as a helical span at residues 219–239 (FIAMLNGANVSVGKYIWKLLI). Over 240–245 (PASLGN) the chain is Extracellular. Residues 246–266 (IVGGLFFSAVVPFYLHLVVVE) traverse the membrane as a helical segment. Topologically, residues 267–627 (RDRKRLSLPE…FYNRHTSPQL (361 aa)) are cytoplasmic. A Phosphothreonine modification is found at T305. Positions 512–537 (PPILPRTTQDTFPHNAPASSPAYTDD) are disordered. Positions 517–533 (RTTQDTFPHNAPASSPA) are enriched in polar residues. A Phosphoserine modification is found at S546. T588 carries the phosphothreonine modification. Residues 605–614 (STTRRQKITE) show a composition bias toward basic and acidic residues. The segment at 605–627 (STTRRQKITEPKNFYNRHTSPQL) is disordered.

Belongs to the FNT transporter (TC 1.A.16) family.

It is found in the membrane. This is an uncharacterized protein from Saccharomyces cerevisiae (strain ATCC 204508 / S288c) (Baker's yeast).